A 294-amino-acid chain; its full sequence is Cytidine deaminase (294 aa).

CMP/dCMP-type deaminase domains lie at 48–168 and 186–294; these read DEDA…FGPK and LTGD…VLLG. Residue 89–91 coordinates substrate; the sequence is NME. His102 serves as a coordination point for Zn(2+). Catalysis depends on Glu104, which acts as the Proton donor. The Zn(2+) site is built by Cys129 and Cys132.

The protein belongs to the cytidine and deoxycytidylate deaminase family. As to quaternary structure, homodimer. Zn(2+) serves as cofactor.

The enzyme catalyses cytidine + H2O + H(+) = uridine + NH4(+). It carries out the reaction 2'-deoxycytidine + H2O + H(+) = 2'-deoxyuridine + NH4(+). Functionally, this enzyme scavenges exogenous and endogenous cytidine and 2'-deoxycytidine for UMP synthesis. This is Cytidine deaminase from Salmonella choleraesuis (strain SC-B67).